Consider the following 1213-residue polypeptide: uncharacterized protein (1213 aa).

The PH domain occupies 289 to 390 (ATKRQGWLLR…WGSVINNARE (102 aa)). Residues 776 to 945 (LDDIVFDRVY…EVNFLEKATR (170 aa)) enclose the VASt domain. Helical transmembrane passes span 996-1016 (LFLQGLAIDLLKLPWAVFHIF) and 1025-1045 (FLVIIFACSVILNLSLMFCFG).

The protein resides in the cytoplasm. It localises to the nucleus membrane. The protein localises to the cytoskeleton. Its subcellular location is the microtubule organizing center. It is found in the spindle pole body. This is an uncharacterized protein from Schizosaccharomyces pombe (strain 972 / ATCC 24843) (Fission yeast).